A 150-amino-acid polypeptide reads, in one-letter code: MQIILLEKVANLGNLGDIVKVKDGYARNFLIPNRKARRATKDAIAEFEVRRAELEKIAAEKLAAAQAVGEKLSGQAFEITQKSGVDGRLFGSVTNGDVAELLKKAGYEVEKAQVRMPEGPLKMIGEHGVQVALHTDVVVDVTVNVIGDHA.

The protein belongs to the bacterial ribosomal protein bL9 family.

In terms of biological role, binds to the 23S rRNA. This chain is Large ribosomal subunit protein bL9, found in Burkholderia thailandensis (strain ATCC 700388 / DSM 13276 / CCUG 48851 / CIP 106301 / E264).